A 48-amino-acid polypeptide reads, in one-letter code: Photosystem II reaction center protein K (48 aa).

The propeptide occupies Met-1–Ala-11. The chain crosses the membrane as a helical span at residues Ile-23–Ala-43.

Belongs to the PsbK family. As to quaternary structure, PSII is composed of 1 copy each of membrane proteins PsbA, PsbB, PsbC, PsbD, PsbE, PsbF, PsbH, PsbI, PsbJ, PsbK, PsbL, PsbM, PsbT, PsbY, PsbZ, Psb30/Ycf12, at least 3 peripheral proteins of the oxygen-evolving complex and a large number of cofactors. It forms dimeric complexes.

The protein resides in the plastid. Its subcellular location is the chloroplast thylakoid membrane. Functionally, one of the components of the core complex of photosystem II (PSII). PSII is a light-driven water:plastoquinone oxidoreductase that uses light energy to abstract electrons from H(2)O, generating O(2) and a proton gradient subsequently used for ATP formation. It consists of a core antenna complex that captures photons, and an electron transfer chain that converts photonic excitation into a charge separation. This chain is Photosystem II reaction center protein K, found in Euglena sanguinea.